A 348-amino-acid polypeptide reads, in one-letter code: Phospho-2-dehydro-3-deoxyheptonate aldolase, Trp-sensitive (348 aa).

Belongs to the class-I DAHP synthase family.

It catalyses the reaction D-erythrose 4-phosphate + phosphoenolpyruvate + H2O = 7-phospho-2-dehydro-3-deoxy-D-arabino-heptonate + phosphate. It participates in metabolic intermediate biosynthesis; chorismate biosynthesis; chorismate from D-erythrose 4-phosphate and phosphoenolpyruvate: step 1/7. Its function is as follows. Stereospecific condensation of phosphoenolpyruvate (PEP) and D-erythrose-4-phosphate (E4P) giving rise to 3-deoxy-D-arabino-heptulosonate-7-phosphate (DAHP). This is Phospho-2-dehydro-3-deoxyheptonate aldolase, Trp-sensitive (aroH) from Buchnera aphidicola subsp. Acyrthosiphon pisum (strain APS) (Acyrthosiphon pisum symbiotic bacterium).